The sequence spans 287 residues: ATP synthase gamma chain (287 aa).

This sequence belongs to the ATPase gamma chain family. F-type ATPases have 2 components, CF(1) - the catalytic core - and CF(0) - the membrane proton channel. CF(1) has five subunits: alpha(3), beta(3), gamma(1), delta(1), epsilon(1). CF(0) has three main subunits: a, b and c.

The protein localises to the cell inner membrane. Functionally, produces ATP from ADP in the presence of a proton gradient across the membrane. The gamma chain is believed to be important in regulating ATPase activity and the flow of protons through the CF(0) complex. The chain is ATP synthase gamma chain from Stenotrophomonas maltophilia (strain R551-3).